Reading from the N-terminus, the 337-residue chain is DNA-directed RNA polymerase subunit alpha (337 aa).

The alpha N-terminal domain (alpha-NTD) stretch occupies residues 1 to 233; that stretch reads MIQKNWQELI…DQLSIFVNFE (233 aa). Residues 249-337 form an alpha C-terminal domain (alpha-CTD) region; that stretch reads FNPALLKKVD…DLAKRYEDQY (89 aa).

The protein belongs to the RNA polymerase alpha chain family. As to quaternary structure, homodimer. The RNAP catalytic core consists of 2 alpha, 1 beta, 1 beta' and 1 omega subunit. When a sigma factor is associated with the core the holoenzyme is formed, which can initiate transcription.

It carries out the reaction RNA(n) + a ribonucleoside 5'-triphosphate = RNA(n+1) + diphosphate. Its function is as follows. DNA-dependent RNA polymerase catalyzes the transcription of DNA into RNA using the four ribonucleoside triphosphates as substrates. The sequence is that of DNA-directed RNA polymerase subunit alpha from Brucella abortus (strain S19).